Consider the following 330-residue polypeptide: 4-hydroxythreonine-4-phosphate dehydrogenase (330 aa).

Residues His-135 and Thr-136 each coordinate substrate. His-165, His-210, and His-266 together coordinate a divalent metal cation. Substrate contacts are provided by Lys-274, Asn-283, and Arg-292.

Belongs to the PdxA family. As to quaternary structure, homodimer. Requires Zn(2+) as cofactor. It depends on Mg(2+) as a cofactor. Co(2+) serves as cofactor.

Its subcellular location is the cytoplasm. The catalysed reaction is 4-(phosphooxy)-L-threonine + NAD(+) = 3-amino-2-oxopropyl phosphate + CO2 + NADH. It functions in the pathway cofactor biosynthesis; pyridoxine 5'-phosphate biosynthesis; pyridoxine 5'-phosphate from D-erythrose 4-phosphate: step 4/5. In terms of biological role, catalyzes the NAD(P)-dependent oxidation of 4-(phosphooxy)-L-threonine (HTP) into 2-amino-3-oxo-4-(phosphooxy)butyric acid which spontaneously decarboxylates to form 3-amino-2-oxopropyl phosphate (AHAP). This is 4-hydroxythreonine-4-phosphate dehydrogenase from Vibrio cholerae serotype O1 (strain ATCC 39315 / El Tor Inaba N16961).